The sequence spans 177 residues: Endoribonuclease YbeY (177 aa).

3 residues coordinate Zn(2+): H114, H118, and H124. Positions 154 to 177 (SYPEAIPTNPAPRRQASSSAGHIE) are disordered. Polar residues predominate over residues 168–177 (QASSSAGHIE).

This sequence belongs to the endoribonuclease YbeY family. Zn(2+) serves as cofactor.

The protein resides in the cytoplasm. Its function is as follows. Single strand-specific metallo-endoribonuclease involved in late-stage 70S ribosome quality control and in maturation of the 3' terminus of the 16S rRNA. This Cellvibrio japonicus (strain Ueda107) (Pseudomonas fluorescens subsp. cellulosa) protein is Endoribonuclease YbeY.